Here is a 335-residue protein sequence, read N- to C-terminus: Ketol-acid reductoisomerase (NADP(+)) 2 (335 aa).

A KARI N-terminal Rossmann domain is found at 1–180 (MKTYYEQDAN…GCTRAGVIET (180 aa)). NADP(+) is bound by residues 24 to 27 (YGSQ), Arg-47, Ser-51, and 81 to 84 (DEQQ). Residue His-106 is part of the active site. Gly-132 is a binding site for NADP(+). A KARI C-terminal knotted domain is found at 181–326 (TFQEETETDL…EELREMMSWI (146 aa)). Mg(2+) contacts are provided by Asp-189, Glu-193, Glu-225, and Glu-229. Ser-250 contacts substrate.

The protein belongs to the ketol-acid reductoisomerase family. The cofactor is Mg(2+).

The enzyme catalyses (2R)-2,3-dihydroxy-3-methylbutanoate + NADP(+) = (2S)-2-acetolactate + NADPH + H(+). It catalyses the reaction (2R,3R)-2,3-dihydroxy-3-methylpentanoate + NADP(+) = (S)-2-ethyl-2-hydroxy-3-oxobutanoate + NADPH + H(+). It participates in amino-acid biosynthesis; L-isoleucine biosynthesis; L-isoleucine from 2-oxobutanoate: step 2/4. Its pathway is amino-acid biosynthesis; L-valine biosynthesis; L-valine from pyruvate: step 2/4. Functionally, involved in the biosynthesis of branched-chain amino acids (BCAA). Catalyzes an alkyl-migration followed by a ketol-acid reduction of (S)-2-acetolactate (S2AL) to yield (R)-2,3-dihydroxy-isovalerate. In the isomerase reaction, S2AL is rearranged via a Mg-dependent methyl migration to produce 3-hydroxy-3-methyl-2-ketobutyrate (HMKB). In the reductase reaction, this 2-ketoacid undergoes a metal-dependent reduction by NADPH to yield (R)-2,3-dihydroxy-isovalerate. This is Ketol-acid reductoisomerase (NADP(+)) 2 from Bacillus thuringiensis subsp. konkukian (strain 97-27).